Consider the following 278-residue polypeptide: NAD-capped RNA hydrolase NudC (278 aa).

Residue arginine 84 participates in substrate binding. Zn(2+) contacts are provided by cysteine 114 and cysteine 117. Glutamate 127 contributes to the substrate binding site. Position 132 (cysteine 132) interacts with Zn(2+). Position 140 (tyrosine 140) interacts with substrate. A Nudix hydrolase domain is found at 141 to 264; sequence PRISPSMIVL…SIARYLIEAY (124 aa). Positions 174, 190, and 194 each coordinate a divalent metal cation. The Nudix box motif lies at 175–196; that stretch reads GFVEPGESAEDCVHREVMEEVQ. Position 208-215 (208-215) interacts with substrate; it reads QCWPFPHS. Glutamate 235 serves as a coordination point for a divalent metal cation. Alanine 257 provides a ligand contact to substrate.

Belongs to the Nudix hydrolase family. NudC subfamily. As to quaternary structure, homodimer. It depends on Mg(2+) as a cofactor. Requires Mn(2+) as cofactor. The cofactor is Zn(2+).

The catalysed reaction is a 5'-end NAD(+)-phospho-ribonucleoside in mRNA + H2O = a 5'-end phospho-adenosine-phospho-ribonucleoside in mRNA + beta-nicotinamide D-ribonucleotide + 2 H(+). The enzyme catalyses NAD(+) + H2O = beta-nicotinamide D-ribonucleotide + AMP + 2 H(+). It catalyses the reaction NADH + H2O = reduced beta-nicotinamide D-ribonucleotide + AMP + 2 H(+). MRNA decapping enzyme that specifically removes the nicotinamide adenine dinucleotide (NAD) cap from a subset of mRNAs by hydrolyzing the diphosphate linkage to produce nicotinamide mononucleotide (NMN) and 5' monophosphate mRNA. The NAD-cap is present at the 5'-end of some mRNAs and stabilizes RNA against 5'-processing. Has preference for mRNAs with a 5'-end purine. Catalyzes the hydrolysis of a broad range of dinucleotide pyrophosphates. The polypeptide is NAD-capped RNA hydrolase NudC (Pseudomonas syringae pv. tomato (strain ATCC BAA-871 / DC3000)).